We begin with the raw amino-acid sequence, 1202 residues long: DNA-directed RNA polymerase subunit beta (1202 aa).

This sequence belongs to the RNA polymerase beta chain family. The RNAP catalytic core consists of 2 alpha, 1 beta, 1 beta' and 1 omega subunit. When a sigma factor is associated with the core the holoenzyme is formed, which can initiate transcription.

It carries out the reaction RNA(n) + a ribonucleoside 5'-triphosphate = RNA(n+1) + diphosphate. Its function is as follows. DNA-dependent RNA polymerase catalyzes the transcription of DNA into RNA using the four ribonucleoside triphosphates as substrates. The protein is DNA-directed RNA polymerase subunit beta of Leuconostoc mesenteroides subsp. mesenteroides (strain ATCC 8293 / DSM 20343 / BCRC 11652 / CCM 1803 / JCM 6124 / NCDO 523 / NBRC 100496 / NCIMB 8023 / NCTC 12954 / NRRL B-1118 / 37Y).